The following is a 53-amino-acid chain: UPF0391 membrane protein SG0393 (53 aa).

The next 2 helical transmembrane spans lie at 4–24 (WGII…GGLA) and 27–47 (AAWA…ISLF).

It belongs to the UPF0391 family.

The protein resides in the cell membrane. The sequence is that of UPF0391 membrane protein SG0393 from Sodalis glossinidius (strain morsitans).